The following is a 158-amino-acid chain: 2-C-methyl-D-erythritol 2,4-cyclodiphosphate synthase (158 aa).

Residues Asp9 and His11 each coordinate a divalent metal cation. 4-CDP-2-C-methyl-D-erythritol 2-phosphate-binding positions include Asp9–His11 and His35–Ser36. His43 serves as a coordination point for a divalent metal cation. 4-CDP-2-C-methyl-D-erythritol 2-phosphate contacts are provided by residues Asp57–Gly59, Phe62–Asp66, Ala101–Ala107, Thr133–Glu136, Phe140, and Arg143.

The protein belongs to the IspF family. In terms of assembly, homotrimer. A divalent metal cation serves as cofactor.

The enzyme catalyses 4-CDP-2-C-methyl-D-erythritol 2-phosphate = 2-C-methyl-D-erythritol 2,4-cyclic diphosphate + CMP. It functions in the pathway isoprenoid biosynthesis; isopentenyl diphosphate biosynthesis via DXP pathway; isopentenyl diphosphate from 1-deoxy-D-xylulose 5-phosphate: step 4/6. In terms of biological role, involved in the biosynthesis of isopentenyl diphosphate (IPP) and dimethylallyl diphosphate (DMAPP), two major building blocks of isoprenoid compounds. Catalyzes the conversion of 4-diphosphocytidyl-2-C-methyl-D-erythritol 2-phosphate (CDP-ME2P) to 2-C-methyl-D-erythritol 2,4-cyclodiphosphate (ME-CPP) with a corresponding release of cytidine 5-monophosphate (CMP). This Bacillus cereus (strain ATCC 10987 / NRS 248) protein is 2-C-methyl-D-erythritol 2,4-cyclodiphosphate synthase.